The chain runs to 360 residues: Phospho-N-acetylmuramoyl-pentapeptide-transferase (360 aa).

Transmembrane regions (helical) follow at residues 21–41 (YLSF…LWMG), 73–93 (TMGG…WANL), 94–114 (SNPY…VGFV), 132–152 (WKYF…YAYG), 168–188 (VMPQ…VGTS), 199–219 (GLAI…AWAT), 236–256 (ASEL…FLWF), 263–283 (VFMG…IAVL), 288–308 (LVLV…ILQV), and 338–358 (VIVR…ATLK).

The protein belongs to the glycosyltransferase 4 family. MraY subfamily. It depends on Mg(2+) as a cofactor.

Its subcellular location is the cell inner membrane. It carries out the reaction UDP-N-acetyl-alpha-D-muramoyl-L-alanyl-gamma-D-glutamyl-meso-2,6-diaminopimeloyl-D-alanyl-D-alanine + di-trans,octa-cis-undecaprenyl phosphate = di-trans,octa-cis-undecaprenyl diphospho-N-acetyl-alpha-D-muramoyl-L-alanyl-D-glutamyl-meso-2,6-diaminopimeloyl-D-alanyl-D-alanine + UMP. It functions in the pathway cell wall biogenesis; peptidoglycan biosynthesis. Functionally, catalyzes the initial step of the lipid cycle reactions in the biosynthesis of the cell wall peptidoglycan: transfers peptidoglycan precursor phospho-MurNAc-pentapeptide from UDP-MurNAc-pentapeptide onto the lipid carrier undecaprenyl phosphate, yielding undecaprenyl-pyrophosphoryl-MurNAc-pentapeptide, known as lipid I. The polypeptide is Phospho-N-acetylmuramoyl-pentapeptide-transferase (Vibrio vulnificus (strain CMCP6)).